Reading from the N-terminus, the 1502-residue chain is G patch domain-containing protein 8 (1502 aa).

The G-patch domain occupies 40–86; it reads SDNIGHRLLQKHGWKLGQGLGKSLQGRTDPIPIVVKYDVMGMGRMEM. The stretch at 89-124 forms a coiled coil; the sequence is DYAEDATERRRVLEVEKEDTEELRQKYKDYVDKEKA. Residues 136–160 form a C2H2-type zinc finger; the sequence is FYCELCDKQYQKHQEFDNHINSYDH. The tract at residues 172–251 is disordered; the sequence is REFARNVSSR…GATASCGLGS (80 aa). Over residues 182–206 the composition is skewed to basic and acidic residues; sequence SRKDEKKQEKALRRLHELAEQRKQA. Residues 223–233 are compositionally biased toward acidic residues; the sequence is VDEEGGEDDKD. Lysine 311 participates in a covalent cross-link: Glycyl lysine isopeptide (Lys-Gly) (interchain with G-Cter in SUMO2). Basic and acidic residues-rich tracts occupy residues 323 to 339 and 424 to 436; these read AEEG…EKSS and NTTH…ESKK. Disordered regions lie at residues 323-391 and 419-541; these read AEEG…ATEP and QMDG…FPVL. Residues 459-472 are compositionally biased toward polar residues; the sequence is SEVSEQPKETSMTE. Lysine 479 is subject to N6-acetyllysine. Residue serine 491 is modified to Phosphoserine. The span at 491 to 519 shows a compositional bias: polar residues; the sequence is SDQSLESHSQKVSETQMCESNSSKETSLA. Lysine 577 is covalently cross-linked (Glycyl lysine isopeptide (Lys-Gly) (interchain with G-Cter in SUMO2)). Basic and acidic residues-rich tracts occupy residues 579-623 and 653-670; these read SRNK…EKIV and SETE…ERSG. The disordered stretch occupies residues 579–1301; it reads SRNKDARTKG…ESTDGAEDAS (723 aa). Serine 653 bears the Phosphoserine mark. Residues 671 to 692 are compositionally biased toward basic residues; sequence KSHRHKKKKKHKKSSKHKRKHK. The segment covering 693 to 707 has biased composition (basic and acidic residues); sequence ADTEEKSSKAESGEK. Over residues 708 to 720 the composition is skewed to basic residues; it reads SKKRKKRKRKKNK. Over residues 733–743 the composition is skewed to pro residues; it reads PEPPGSGSPAP. Residues serine 738, serine 740, and serine 758 each carry the phosphoserine modification. Basic and acidic residues predominate over residues 750-772; that stretch reads AQDDSQRRSLPAEEGSSGKKDEG. 2 stretches are compositionally biased toward basic residues: residues 799–809 and 852–867; these read AGTKRSSRSSH and SRSR…RSSR. Residues 868 to 896 are compositionally biased toward low complexity; that stretch reads RSYSSSSDASSDQSCYSRQRSYSDDSYSD. Serine 911 and serine 914 each carry phosphoserine. Positions 919–928 are enriched in basic residues; the sequence is SKHRSKRHKY. Phosphoserine occurs at positions 981, 1009, 1014, 1033, and 1035. Over residues 1010-1027 the composition is skewed to basic and acidic residues; it reads WGHESPEERHSGRRDFIR. Residues 1042 to 1059 are compositionally biased toward basic and acidic residues; it reads GRGEGPGKKDDGRGDDSK. The residue at position 1081 (serine 1081) is a Phosphoserine. Composition is skewed to basic and acidic residues over residues 1093–1108 and 1159–1171; these read LLEK…KPSV and KKCE…RGEE. A Glycyl lysine isopeptide (Lys-Gly) (interchain with G-Cter in SUMO2) cross-link involves residue lysine 1105. Position 1107 is a phosphoserine (serine 1107). Serine 1175 carries the phosphoserine modification.

The protein is G patch domain-containing protein 8 (GPATCH8) of Homo sapiens (Human).